The primary structure comprises 895 residues: DNA mismatch repair protein MutS (895 aa).

632 to 639 lines the ATP pocket; the sequence is GPNMAGKS. Positions 824-849 are disordered; that stretch reads VTQDKKQVKKQTKNNHSARSGSRQQQ. The segment covering 837–849 has biased composition (polar residues); the sequence is NNHSARSGSRQQQ.

Belongs to the DNA mismatch repair MutS family.

Its function is as follows. This protein is involved in the repair of mismatches in DNA. It is possible that it carries out the mismatch recognition step. This protein has a weak ATPase activity. This chain is DNA mismatch repair protein MutS, found in Desulforapulum autotrophicum (strain ATCC 43914 / DSM 3382 / VKM B-1955 / HRM2) (Desulfobacterium autotrophicum).